The chain runs to 1882 residues: RNA2 polyprotein (1882 aa).

A run of 2 repeats spans residues 554 to 606 (SWSS…LPSF) and 607 to 659 (SWSS…LPSF). Positions 554–698 (SWSSPLPLFA…VSDEFMDVLP (145 aa)) are 2.5 X tandem repeats, Pro-rich. The 3; truncated and approximate repeat unit spans residues 660 to 698 (SWSSPLPLFASFKVNRGACFLQVLPARKVVSDEFMDVLP). Composition is skewed to polar residues over residues 1289–1303 (SSLF…QQGT) and 1838–1847 (PSATLGTNNP). Disordered stretches follow at residues 1289–1320 (SSLF…SSVQ) and 1838–1863 (PSAT…PGGQ).

The protein belongs to the nepoviruses RNA2 polyprotein family. In terms of processing, specific enzymatic cleavages in vivo by the P1 encoded 3C-like protease yield mature proteins.

Its subcellular location is the host cell junction. The protein resides in the host plasmodesma. It is found in the virion. Protein 2A: implicated in RNA2 replication. Could also be required for nematode transmission of the virus. Its function is as follows. Transports viral genome to neighboring plant cells directly through plasmosdesmata, without any budding. The movement protein allows efficient cell to cell propagation, by bypassing the host cell wall barrier. Acts by forming a tubular structure at the host plasmodesmata, enlarging it enough to allow free passage of virion capsids. The sequence is that of RNA2 polyprotein from Tomato ringspot virus (isolate raspberry) (ToRSV).